We begin with the raw amino-acid sequence, 232 residues long: Probable metallo-hydrolase M6_Spy0554 (232 aa).

His-75, His-77, Asp-79, His-80, His-155, Asp-174, and His-215 together coordinate Zn(2+).

Requires Zn(2+) as cofactor.

This Streptococcus pyogenes serotype M6 (strain ATCC BAA-946 / MGAS10394) protein is Probable metallo-hydrolase M6_Spy0554.